The chain runs to 622 residues: MALLQISEPGMAPAPHQRRLAVGIDLGTTNSLVAAVRNSVPEVLPDEAGRVLLPSVVRYLEKGGRRIGHEAKEQAATDPRNTIVSVKRFMGRGKAEVEGAANAPYEFVDAPGMVQIRTIDGVKSPVEVSAEILATLRYRAEDSLGDDLVGAVITVPAYFDDAQRQATKDAARLAGLNVLRLLNEPTAAAIAYGLDNAAEGLYAVYDLGGGTFDLSILKLTKGVFEVLAAGGDSALGGDDFDHALFGHVLAQAGIDAKTLAPEDVRLLLDRVRVLKEALSSAPEAALDVTLSSGAHLVQTISHDTFASLVEPLVQRTLTPTRKALRDAQVTPADIKGVVLVGGATRMPVIRDAVAKYFGQPPLVNLDPDQVVALGAAIQADLLAGNRGTGDDWLLLDVIPLSLGVETMGGLVEKIIPRNSTIPIARAQEFTTFKDGQTAMAIHVVQGERELVADCRSLARFELRGIPPMTAGAARIRVTYQVDADGLLSVFAREQLSGVEASVVVKPSYGLADDDIAKMLEDSFKTAEIDMRARALREAQVEAERMLEATQAALAADGELLETDERAQVDALAAALRAVAQGDDTNAIEAATKALADGTDEFAARRMDKSIKRALSGRRLDEI.

The protein belongs to the heat shock protein 70 family.

Its function is as follows. Chaperone involved in the maturation of iron-sulfur cluster-containing proteins. Has a low intrinsic ATPase activity which is markedly stimulated by HscB. The sequence is that of Chaperone protein HscA homolog from Burkholderia cenocepacia (strain HI2424).